Here is a 251-residue protein sequence, read N- to C-terminus: 4-hydroxy-tetrahydrodipicolinate reductase (251 aa).

NAD(+) is bound by residues 8-13, 76-78, and 106-109; these read GAKGRM, GTT, and APNF. The Proton donor/acceptor role is filled by His136. A (S)-2,3,4,5-tetrahydrodipicolinate-binding site is contributed by His137. The active-site Proton donor is Lys140. 146–147 provides a ligand contact to (S)-2,3,4,5-tetrahydrodipicolinate; sequence GT.

It belongs to the DapB family.

It is found in the cytoplasm. The enzyme catalyses (S)-2,3,4,5-tetrahydrodipicolinate + NAD(+) + H2O = (2S,4S)-4-hydroxy-2,3,4,5-tetrahydrodipicolinate + NADH + H(+). The catalysed reaction is (S)-2,3,4,5-tetrahydrodipicolinate + NADP(+) + H2O = (2S,4S)-4-hydroxy-2,3,4,5-tetrahydrodipicolinate + NADPH + H(+). Its pathway is amino-acid biosynthesis; L-lysine biosynthesis via DAP pathway; (S)-tetrahydrodipicolinate from L-aspartate: step 4/4. In terms of biological role, catalyzes the conversion of 4-hydroxy-tetrahydrodipicolinate (HTPA) to tetrahydrodipicolinate. This Bifidobacterium longum subsp. infantis (strain ATCC 15697 / DSM 20088 / JCM 1222 / NCTC 11817 / S12) protein is 4-hydroxy-tetrahydrodipicolinate reductase.